The following is a 305-amino-acid chain: Ribosomal RNA small subunit methyltransferase H (305 aa).

S-adenosyl-L-methionine is bound by residues 47 to 49 (GGH), Asp-66, Phe-93, Asp-108, and Gln-115. The disordered stretch occupies residues 279–305 (ADSNEKLNNPRSRSAKLRLAKKRNPNE). The segment covering 291–305 (RSAKLRLAKKRNPNE) has biased composition (basic residues).

This sequence belongs to the methyltransferase superfamily. RsmH family.

The protein resides in the cytoplasm. The enzyme catalyses cytidine(1402) in 16S rRNA + S-adenosyl-L-methionine = N(4)-methylcytidine(1402) in 16S rRNA + S-adenosyl-L-homocysteine + H(+). Specifically methylates the N4 position of cytidine in position 1402 (C1402) of 16S rRNA. This Prochlorococcus marinus (strain SARG / CCMP1375 / SS120) protein is Ribosomal RNA small subunit methyltransferase H.